The sequence spans 400 residues: Elongation factor Tu 1 (400 aa).

Positions 10–209 (KPHVNIGTIG…AVDEYIPTPQ (200 aa)) constitute a tr-type G domain. The G1 stretch occupies residues 19 to 26 (GHVDHGKT). Position 19-26 (19-26 (GHVDHGKT)) interacts with GTP. Residue Thr26 coordinates Mg(2+). The tract at residues 60 to 64 (GITIN) is G2. A G3 region spans residues 81-84 (DCPG). GTP contacts are provided by residues 81 to 85 (DCPGH) and 136 to 139 (NKAD). A G4 region spans residues 136 to 139 (NKAD). Residues 174 to 176 (SAL) are G5.

The protein belongs to the TRAFAC class translation factor GTPase superfamily. Classic translation factor GTPase family. EF-Tu/EF-1A subfamily. Monomer.

The protein resides in the cytoplasm. It carries out the reaction GTP + H2O = GDP + phosphate + H(+). GTP hydrolase that promotes the GTP-dependent binding of aminoacyl-tRNA to the A-site of ribosomes during protein biosynthesis. The polypeptide is Elongation factor Tu 1 (Pelotomaculum thermopropionicum (strain DSM 13744 / JCM 10971 / SI)).